Consider the following 356-residue polypeptide: Protein pelota homolog (356 aa).

The protein belongs to the eukaryotic release factor 1 family. Pelota subfamily. Monomer. The cofactor is a divalent metal cation.

It localises to the cytoplasm. Its function is as follows. May function in recognizing stalled ribosomes, interact with stem-loop structures in stalled mRNA molecules, and effect endonucleolytic cleavage of the mRNA. May play a role in the release non-functional ribosomes and degradation of damaged mRNAs. Has endoribonuclease activity. The sequence is that of Protein pelota homolog from Pyrococcus abyssi (strain GE5 / Orsay).